The chain runs to 348 residues: Alternative squalene epoxidase (348 aa).

The segment covering methionine 1–glutamate 10 has biased composition (basic and acidic residues). The disordered stretch occupies residues methionine 1–serine 26. Positions glutamine 12 to serine 26 are enriched in low complexity. 3 consecutive transmembrane segments (helical) span residues alanine 55 to serine 75, leucine 105 to phenylalanine 125, and glycine 153 to isoleucine 173. The region spanning phenylalanine 197–threonine 332 is the Fatty acid hydroxylase domain. Residues histidine 211–histidine 215 carry the Histidine box-1 motif. The short motif at histidine 226–histidine 230 is the Histidine box-2 element. Helical transmembrane passes span glycine 243–valine 263 and serine 277–phenylalanine 297. The short motif at histidine 308–histidine 312 is the Histidine box-3 element.

The protein belongs to the sterol desaturase family. In terms of assembly, interacts with cytochrome b5/PHATRDRAFT_30770. Requires Fe cation as cofactor.

It localises to the endoplasmic reticulum membrane. The catalysed reaction is squalene + 2 Fe(II)-[cytochrome b5] + O2 + 2 H(+) = (S)-2,3-epoxysqualene + 2 Fe(III)-[cytochrome b5] + H2O. The protein operates within terpene metabolism; lanosterol biosynthesis; lanosterol from farnesyl diphosphate. Its activity is regulated as follows. The activity of this enzyme is not inhibited by terbinafine, an established inhibitor of the conventional flavoprotein squalene epoxidase. Catalyzes the stereospecific epoxidation of squalene at the terminal double bond to form (S)-2,3-epoxysqualene, the first oxygenation step in sterol biosynthesis. The polypeptide is Alternative squalene epoxidase (Phaeodactylum tricornutum (strain CCAP 1055/1)).